The following is a 578-amino-acid chain: Protein LIKE EARLY STARVATION, chloroplastic (578 aa).

The transit peptide at 1–56 directs the protein to the chloroplast; it reads MALRLGVSIGAALGSSHWDDGQRVRQRDFSASVNFTAPVTSRRSLRGSRTGVRILR. Disordered stretches follow at residues 146–166 and 187–206; these read NNSG…TSEV and SETS…TPPQ.

This sequence belongs to the ESV1 family. As to expression, expressed ubiquitously.

Its subcellular location is the plastid. It is found in the chloroplast stroma. In terms of biological role, binds preferentially to highly ordered alpha-glucans, such as starch and crystalline maltodextrins. Involved in the organization of the starch granule matrix, thus influencing starch turnover by modulating the accessibility of starch polymers to modifying and degrading enzymes involved in phosphorylation, hydrolyzes and synthesis, including starch synthases (SSI and SSIII), starch phosphorylases (PHS1), isoamylase, beta-amylase, glucan water dikinase (GWD) and phosphoglucan water dikinase (PWD). The sequence is that of Protein LIKE EARLY STARVATION, chloroplastic from Arabidopsis thaliana (Mouse-ear cress).